The following is a 409-amino-acid chain: Peptide chain release factor subunit 1 (409 aa).

The protein belongs to the eukaryotic release factor 1 family. In terms of assembly, heterodimer of two subunits, one of which binds GTP.

It localises to the cytoplasm. Functionally, directs the termination of nascent peptide synthesis (translation) in response to the termination codons UAA, UAG and UGA. In Methanopyrus kandleri (strain AV19 / DSM 6324 / JCM 9639 / NBRC 100938), this protein is Peptide chain release factor subunit 1.